The following is a 353-amino-acid chain: Photosystem II D2 protein (353 aa).

Threonine 2 carries the post-translational modification N-acetylthreonine. Phosphothreonine is present on threonine 2. The chain crosses the membrane as a helical span at residues 41 to 61; that stretch reads CAYFALGGWFTGTTFVTSWYT. Histidine 118 lines the chlorophyll a pocket. The helical transmembrane segment at 125-141 threads the bilayer; that stretch reads GFMLRQFELARSVQLRP. Residues glutamine 130 and asparagine 143 each contribute to the pheophytin a site. A helical transmembrane segment spans residues 153–166; sequence VFVSVFLIYPLGQS. Histidine 198 lines the chlorophyll a pocket. Residues 208–228 form a helical membrane-spanning segment; it reads AALLCAIHGATVENTLFEDGD. Positions 215 and 262 each coordinate a plastoquinone. Residue histidine 215 participates in Fe cation binding. Histidine 269 contributes to the Fe cation binding site. A helical transmembrane segment spans residues 279–295; the sequence is GLWMSAIGVVGLALNLR.

This sequence belongs to the reaction center PufL/M/PsbA/D family. In terms of assembly, PSII is composed of 1 copy each of membrane proteins PsbA, PsbB, PsbC, PsbD, PsbE, PsbF, PsbH, PsbI, PsbJ, PsbK, PsbL, PsbM, PsbT, PsbX, PsbY, PsbZ, Psb30/Ycf12, at least 3 peripheral proteins of the oxygen-evolving complex and a large number of cofactors. It forms dimeric complexes. Requires The D1/D2 heterodimer binds P680, chlorophylls that are the primary electron donor of PSII, and subsequent electron acceptors. It shares a non-heme iron and each subunit binds pheophytin, quinone, additional chlorophylls, carotenoids and lipids. There is also a Cl(-1) ion associated with D1 and D2, which is required for oxygen evolution. The PSII complex binds additional chlorophylls, carotenoids and specific lipids. as cofactor.

It localises to the plastid. The protein localises to the chloroplast thylakoid membrane. It catalyses the reaction 2 a plastoquinone + 4 hnu + 2 H2O = 2 a plastoquinol + O2. Photosystem II (PSII) is a light-driven water:plastoquinone oxidoreductase that uses light energy to abstract electrons from H(2)O, generating O(2) and a proton gradient subsequently used for ATP formation. It consists of a core antenna complex that captures photons, and an electron transfer chain that converts photonic excitation into a charge separation. The D1/D2 (PsbA/PsbD) reaction center heterodimer binds P680, the primary electron donor of PSII as well as several subsequent electron acceptors. D2 is needed for assembly of a stable PSII complex. The protein is Photosystem II D2 protein of Saccharum hybrid (Sugarcane).